The chain runs to 120 residues: uncharacterized protein (120 aa).

Residues 1 to 19 (MTSFAVVARLITRAPRVRA) form the signal peptide. Disordered regions lie at residues 48 to 71 (VAKKADEGAQTISDAAGNLKDKAK) and 90 to 120 (DTVTGKTEETKESIKATAKTVERSMNTKNLK). The span at 90–103 (DTVTGKTEETKESI) shows a compositional bias: basic and acidic residues.

This is an uncharacterized protein from Arabidopsis thaliana (Mouse-ear cress).